The primary structure comprises 189 residues: Ras-like protein 1 (189 aa).

Gly10 to Ser17 is a GTP binding site. An Effector region motif is present at residues Tyr32–Tyr40. GTP is bound by residues Asp57 to Gln61 and Asn116 to Asp119. Cys186 is subject to Cysteine methyl ester. A lipid anchor (S-geranylgeranyl cysteine) is attached at Cys186. A propeptide spans Lys187–Leu189 (removed in mature form).

It belongs to the small GTPase superfamily. Ras family.

It localises to the cell membrane. The catalysed reaction is GTP + H2O = GDP + phosphate + H(+). With respect to regulation, alternates between an inactive form bound to GDP and an active form bound to GTP. Activated by a guanine nucleotide-exchange factor (GEF) and inactivated by a GTPase-activating protein (GAP). In terms of biological role, ras proteins bind GDP/GTP and possess intrinsic GTPase activity. Plays a role in eye development by regulating cell growth, survival of postmitotic ommatidial cells and differentiation of photoreceptor cells. During larval development, mediates Ptth/tor signaling leading to the production of ecdysone, a hormone required for the initiation of metamorphosis. The protein is Ras-like protein 1 of Drosophila persimilis (Fruit fly).